The primary structure comprises 284 residues: Tropomyosin (284 aa).

A coiled-coil region spans residues 1–284 (MDAIKKKMVA…DATFAELAGY (284 aa)). Over residues 32 to 41 (TEEAKAKIED) the composition is skewed to basic and acidic residues. A disordered region spans residues 32–60 (TEEAKAKIEDDYNSLQKKSIQTENDLDNT). Polar residues predominate over residues 44-60 (NSLQKKSIQTENDLDNT).

This sequence belongs to the tropomyosin family. As to quaternary structure, homodimer.

Tropomyosin, in association with the troponin complex, plays a central role in the calcium dependent regulation of muscle contraction. This Mytilus edulis (Blue mussel) protein is Tropomyosin.